We begin with the raw amino-acid sequence, 363 residues long: Anhydro-N-acetylmuramic acid kinase (363 aa).

10-17 (GTSLDGLD) serves as a coordination point for ATP.

It belongs to the anhydro-N-acetylmuramic acid kinase family.

The catalysed reaction is 1,6-anhydro-N-acetyl-beta-muramate + ATP + H2O = N-acetyl-D-muramate 6-phosphate + ADP + H(+). It participates in amino-sugar metabolism; 1,6-anhydro-N-acetylmuramate degradation. It functions in the pathway cell wall biogenesis; peptidoglycan recycling. Catalyzes the specific phosphorylation of 1,6-anhydro-N-acetylmuramic acid (anhMurNAc) with the simultaneous cleavage of the 1,6-anhydro ring, generating MurNAc-6-P. Is required for the utilization of anhMurNAc either imported from the medium or derived from its own cell wall murein, and thus plays a role in cell wall recycling. Contributes to intrinsic fosfomycin resistance in P.putida. The protein is Anhydro-N-acetylmuramic acid kinase of Pseudomonas putida (strain ATCC 47054 / DSM 6125 / CFBP 8728 / NCIMB 11950 / KT2440).